Here is a 256-residue protein sequence, read N- to C-terminus: MNNAIFPNKFKAALAAQQVQIGCWSALASPITTEVLGLAGFDWLVLDGEHAPNDVTTLIPQLMALKGSASAPVVRVPTNEPVIIKRMLDIGFYNFLIPFVETQEEAARAVASTRYPPEGIRGVSVSHRANMFGTVPDYFAQSNKNITIIVQIESQLGVDNVDAIAATEGVDGIFVGPSDLAAALGHLGNASHPDVQQTIQHIFARAKAHGKPCGILAPVEADARRYLEWGATFVAVGSDLGAFRASTQKLADTFKK.

His50 functions as the Proton acceptor in the catalytic mechanism. Gln151 provides a ligand contact to substrate. Glu153 serves as a coordination point for Mg(2+). Substrate is bound by residues Ser178 and Asp179. A Mg(2+)-binding site is contributed by Asp179.

This sequence belongs to the HpcH/HpaI aldolase family. KDGluc aldolase subfamily. Homohexamer; trimer of dimers. Requires Mg(2+) as cofactor.

The catalysed reaction is 5-dehydro-4-deoxy-D-glucarate = 2-hydroxy-3-oxopropanoate + pyruvate. It catalyses the reaction 2-dehydro-3-deoxy-D-glucarate = 2-hydroxy-3-oxopropanoate + pyruvate. Its pathway is carbohydrate acid metabolism; galactarate degradation; D-glycerate from galactarate: step 2/3. Functionally, catalyzes the reversible retro-aldol cleavage of both 5-keto-4-deoxy-D-glucarate and 2-keto-3-deoxy-D-glucarate to pyruvate and tartronic semialdehyde. In Salmonella agona (strain SL483), this protein is 5-keto-4-deoxy-D-glucarate aldolase.